The primary structure comprises 69 residues: Cytochrome b-c1 complex subunit 6 (69 aa).

Disulfide bonds link C17–C59 and C31–C45.

Belongs to the UQCRH/QCR6 family. As to quaternary structure, component of the ubiquinol-cytochrome c oxidoreductase (cytochrome b-c1 complex, complex III, CIII), a multisubunit enzyme composed of 3 respiratory subunits cytochrome b, cytochrome c1 and Rieske protein, 2 core protein subunits, and additional low-molecular weight protein subunits. The complex exists as an obligatory dimer and forms supercomplexes (SCs) in the inner mitochondrial membrane with cytochrome c oxidase (complex IV, CIV).

It localises to the mitochondrion inner membrane. Functionally, component of the ubiquinol-cytochrome c oxidoreductase, a multisubunit transmembrane complex that is part of the mitochondrial electron transport chain which drives oxidative phosphorylation. The respiratory chain contains 3 multisubunit complexes succinate dehydrogenase (complex II, CII), ubiquinol-cytochrome c oxidoreductase (cytochrome b-c1 complex, complex III, CIII) and cytochrome c oxidase (complex IV, CIV), that cooperate to transfer electrons derived from NADH and succinate to molecular oxygen, creating an electrochemical gradient over the inner membrane that drives transmembrane transport and the ATP synthase. The cytochrome b-c1 complex catalyzes electron transfer from ubiquinol to cytochrome c, linking this redox reaction to translocation of protons across the mitochondrial inner membrane, with protons being carried across the membrane as hydrogens on the quinol. In the process called Q cycle, 2 protons are consumed from the matrix, 4 protons are released into the intermembrane space and 2 electrons are passed to cytochrome c. The protein is Cytochrome b-c1 complex subunit 6 of Solanum tuberosum (Potato).